We begin with the raw amino-acid sequence, 228 residues long: 7-cyano-7-deazaguanine synthase (228 aa).

ATP is bound at residue 13–23 (LSGGMDSTLSS). 4 residues coordinate Zn(2+): Cys192, Cys200, Cys203, and Cys206.

The protein belongs to the QueC family. Requires Zn(2+) as cofactor.

It carries out the reaction 7-carboxy-7-deazaguanine + NH4(+) + ATP = 7-cyano-7-deazaguanine + ADP + phosphate + H2O + H(+). It participates in purine metabolism; 7-cyano-7-deazaguanine biosynthesis. In terms of biological role, catalyzes the ATP-dependent conversion of 7-carboxy-7-deazaguanine (CDG) to 7-cyano-7-deazaguanine (preQ(0)). In Aliarcobacter butzleri (strain RM4018) (Arcobacter butzleri), this protein is 7-cyano-7-deazaguanine synthase.